Consider the following 338-residue polypeptide: Glycerol-3-phosphate dehydrogenase [NAD(P)+] (338 aa).

NADPH is bound by residues serine 13, tryptophan 14, and lysine 108. Sn-glycerol 3-phosphate contacts are provided by lysine 108, glycine 139, and serine 141. An NADPH-binding site is contributed by alanine 143. Residues lysine 194, aspartate 247, serine 257, arginine 258, and asparagine 259 each contribute to the sn-glycerol 3-phosphate site. Lysine 194 serves as the catalytic Proton acceptor. Arginine 258 serves as a coordination point for NADPH. The NADPH site is built by valine 282 and glutamate 284.

This sequence belongs to the NAD-dependent glycerol-3-phosphate dehydrogenase family.

It is found in the cytoplasm. The catalysed reaction is sn-glycerol 3-phosphate + NAD(+) = dihydroxyacetone phosphate + NADH + H(+). The enzyme catalyses sn-glycerol 3-phosphate + NADP(+) = dihydroxyacetone phosphate + NADPH + H(+). It functions in the pathway membrane lipid metabolism; glycerophospholipid metabolism. Catalyzes the reduction of the glycolytic intermediate dihydroxyacetone phosphate (DHAP) to sn-glycerol 3-phosphate (G3P), the key precursor for phospholipid synthesis. The sequence is that of Glycerol-3-phosphate dehydrogenase [NAD(P)+] from Streptococcus pneumoniae (strain JJA).